A 152-amino-acid chain; its full sequence is Nucleoside diphosphate kinase (152 aa).

The ATP site is built by K11, F59, R87, T93, R104, and N114. Catalysis depends on H117, which acts as the Pros-phosphohistidine intermediate.

Belongs to the NDK family. In terms of assembly, homotetramer. The cofactor is Mg(2+).

The protein localises to the cytoplasm. The catalysed reaction is a 2'-deoxyribonucleoside 5'-diphosphate + ATP = a 2'-deoxyribonucleoside 5'-triphosphate + ADP. The enzyme catalyses a ribonucleoside 5'-diphosphate + ATP = a ribonucleoside 5'-triphosphate + ADP. In terms of biological role, major role in the synthesis of nucleoside triphosphates other than ATP. The ATP gamma phosphate is transferred to the NDP beta phosphate via a ping-pong mechanism, using a phosphorylated active-site intermediate. The chain is Nucleoside diphosphate kinase from Prochlorococcus marinus (strain MIT 9215).